Reading from the N-terminus, the 536-residue chain is Probable serine/threonine-protein kinase DDB_G0268550 (536 aa).

In terms of domain architecture, Protein kinase spans 14–305; it reads EIIEKNYRKG…IDVLEIHPFL (292 aa). ATP contacts are provided by residues 20-28 and Lys51; that span reads YRKGGFSKI. Residue Asp147 is the Proton acceptor of the active site. The interval 161–192 is disordered; it reads DNNNNNNNNNNNNNNNNNNNSNINDDNNNSNS.

The protein belongs to the protein kinase superfamily. Ser/Thr protein kinase family. Mg(2+) is required as a cofactor.

It carries out the reaction L-seryl-[protein] + ATP = O-phospho-L-seryl-[protein] + ADP + H(+). The catalysed reaction is L-threonyl-[protein] + ATP = O-phospho-L-threonyl-[protein] + ADP + H(+). This chain is Probable serine/threonine-protein kinase DDB_G0268550, found in Dictyostelium discoideum (Social amoeba).